The chain runs to 230 residues: Demethylmenaquinone methyltransferase (230 aa).

Residues threonine 62, aspartate 80, 100-101 (DA), and serine 117 contribute to the S-adenosyl-L-methionine site.

It belongs to the class I-like SAM-binding methyltransferase superfamily. MenG/UbiE family.

It catalyses the reaction a 2-demethylmenaquinol + S-adenosyl-L-methionine = a menaquinol + S-adenosyl-L-homocysteine + H(+). It participates in quinol/quinone metabolism; menaquinone biosynthesis; menaquinol from 1,4-dihydroxy-2-naphthoate: step 2/2. Methyltransferase required for the conversion of demethylmenaquinol (DMKH2) to menaquinol (MKH2). The polypeptide is Demethylmenaquinone methyltransferase (Mycobacterium sp. (strain JLS)).